The primary structure comprises 726 residues: Elongation factor 2 (726 aa).

One can recognise a tr-type G domain in the interval 19–260 (DRIRNIGICA…MVIKHLPSPP (242 aa)). GTP-binding positions include 28–35 (AHIDHGKT), 94–98 (DTPGH), and 148–151 (NKVD). The residue at position 602 (His602) is a Diphthamide.

This sequence belongs to the TRAFAC class translation factor GTPase superfamily. Classic translation factor GTPase family. EF-G/EF-2 subfamily.

The protein localises to the cytoplasm. Catalyzes the GTP-dependent ribosomal translocation step during translation elongation. During this step, the ribosome changes from the pre-translocational (PRE) to the post-translocational (POST) state as the newly formed A-site-bound peptidyl-tRNA and P-site-bound deacylated tRNA move to the P and E sites, respectively. Catalyzes the coordinated movement of the two tRNA molecules, the mRNA and conformational changes in the ribosome. In Methanocaldococcus jannaschii (strain ATCC 43067 / DSM 2661 / JAL-1 / JCM 10045 / NBRC 100440) (Methanococcus jannaschii), this protein is Elongation factor 2 (fusA).